Here is a 442-residue protein sequence, read N- to C-terminus: Trigger factor (442 aa).

The 86-residue stretch at 165–250 (DDRVIIDFEG…LQKVMAPELP (86 aa)) folds into the PPIase FKBP-type domain.

The protein belongs to the FKBP-type PPIase family. Tig subfamily.

It localises to the cytoplasm. It catalyses the reaction [protein]-peptidylproline (omega=180) = [protein]-peptidylproline (omega=0). Involved in protein export. Acts as a chaperone by maintaining the newly synthesized protein in an open conformation. Functions as a peptidyl-prolyl cis-trans isomerase. In Coxiella burnetii (strain RSA 493 / Nine Mile phase I), this protein is Trigger factor.